Consider the following 310-residue polypeptide: Cytochrome f (310 aa).

The N-terminal stretch at 1-27 is a signal peptide; that stretch reads MRRILTFFLGSIIIGLSIIISPSSSFA. Tyr28, Cys48, Cys51, and His52 together coordinate heme. Residues 277–297 traverse the membrane as a helical segment; it reads VIGLIAFFAGVALTQILLVLK.

Belongs to the cytochrome f family. In terms of assembly, the 4 large subunits of the cytochrome b6-f complex are cytochrome b6, subunit IV (17 kDa polypeptide, PetD), cytochrome f and the Rieske protein, while the 4 small subunits are PetG, PetL, PetM and PetN. The complex functions as a dimer. Requires heme as cofactor.

It localises to the cellular thylakoid membrane. Functionally, component of the cytochrome b6-f complex, which mediates electron transfer between photosystem II (PSII) and photosystem I (PSI), cyclic electron flow around PSI, and state transitions. In Prochlorococcus marinus (strain SARG / CCMP1375 / SS120), this protein is Cytochrome f.